A 277-amino-acid chain; its full sequence is Probable cyclic nucleotide phosphodiesterase MCR_0369 (277 aa).

Fe cation-binding residues include D17, H19, D53, N83, H165, H204, and H206. AMP contacts are provided by residues H19, D53, and 83–84 (NH). H206 is a binding site for AMP.

This sequence belongs to the cyclic nucleotide phosphodiesterase class-III family. It depends on Fe(2+) as a cofactor.

This is Probable cyclic nucleotide phosphodiesterase MCR_0369 from Moraxella catarrhalis (strain BBH18).